The chain runs to 466 residues: MVLAVLIGVLVGIVLVSSLLLRWNEVRYSRKQGLPPGTMGWPLFGETTEFLKQGPSFMKARRLRYGSLFRTHILGCPTVVCMDPELNRQMLQQGEGRGFVPGYPQSMLDILGRNNIAAVHGPLHRAMRGSMLALVRPASIRSSLLPKIDAFMRSHLHGWAGDLVDIQDKTKEMALLSALRQIAGITAGPLSDALKTELYTLVLGTISLPINLPGTSYYQGFQARKKLVSMLEKMIAERRSSGLVHNDMLDALLSGNDGTRERLSDEQIIDLIITLIYSGYETMSTTSMMAVKYLSDHPKALEELRKEHFDIRKGKSPEEAIDYNDFKSMTFTRAVIFETLRLATVVNGLLRKTTQDVEMNGYVIPKGWRIYVYTREINYDPCLYPDPMTFNPWRWLEKNMESHPHFMLFGGGGRMCPGKEVGTAEIATFLHYFVTRYRWEEEGTNTILKFPRVEAPNGLHIRVQNY.

The helical transmembrane segment at 1-21 threads the bilayer; that stretch reads MVLAVLIGVLVGIVLVSSLLL. C416 is a binding site for heme.

It belongs to the cytochrome P450 family. Heme serves as cofactor.

It localises to the membrane. The enzyme catalyses 6-deoxoteasterone + reduced [NADPH--hemoprotein reductase] + O2 = 6alpha-hydroxyteasterone + oxidized [NADPH--hemoprotein reductase] + H2O + H(+). It catalyses the reaction 6alpha-hydroxytyphasterol + reduced [NADPH--hemoprotein reductase] + O2 = teasterone + oxidized [NADPH--hemoprotein reductase] + 2 H2O + H(+). The catalysed reaction is 3-dehydro-6-deoxoteasterone + reduced [NADPH--hemoprotein reductase] + O2 = 3-dehydro-6alpha-hydroxyteasterone + oxidized [NADPH--hemoprotein reductase] + H2O + H(+). It carries out the reaction 3-dehydro-6alpha-hydroxyteasterone + reduced [NADPH--hemoprotein reductase] + O2 = 3-dehydroteasterone + oxidized [NADPH--hemoprotein reductase] + 2 H2O + H(+). The enzyme catalyses 6-deoxotyphasterol + reduced [NADPH--hemoprotein reductase] + O2 = 6alpha-hydroxytyphasterol + oxidized [NADPH--hemoprotein reductase] + H2O + H(+). It catalyses the reaction 6alpha-hydroxytyphasterol + reduced [NADPH--hemoprotein reductase] + O2 = typhasterol + oxidized [NADPH--hemoprotein reductase] + 2 H2O + H(+). The catalysed reaction is 6-deoxocastasterone + reduced [NADPH--hemoprotein reductase] + O2 = 6alpha-hydroxycastasterone + oxidized [NADPH--hemoprotein reductase] + H2O + H(+). It carries out the reaction 6alpha-hydroxycastasterone + reduced [NADPH--hemoprotein reductase] + O2 = castasterone + oxidized [NADPH--hemoprotein reductase] + 2 H2O + H(+). The enzyme catalyses 3-dehydro-6-deoxoteasterone + 2 reduced [NADPH--hemoprotein reductase] + 2 O2 = 3-dehydroteasterone + 2 oxidized [NADPH--hemoprotein reductase] + 3 H2O + 2 H(+). It catalyses the reaction 6-deoxocastasterone + 2 reduced [NADPH--hemoprotein reductase] + 2 O2 = castasterone + 2 oxidized [NADPH--hemoprotein reductase] + 3 H2O + 2 H(+). The catalysed reaction is 6-deoxoteasterone + 2 reduced [NADPH--hemoprotein reductase] + 2 O2 = teasterone + 2 oxidized [NADPH--hemoprotein reductase] + 3 H2O + 2 H(+). It carries out the reaction 6-deoxotyphasterol + 2 reduced [NADPH--hemoprotein reductase] + 2 O2 = typhasterol + 2 oxidized [NADPH--hemoprotein reductase] + 3 H2O + 2 H(+). The protein operates within plant hormone biosynthesis; brassinosteroid biosynthesis. In terms of biological role, involved in reduction steps of the biosynthesis of plant campesterol-derivative steroids, ending to castasterone (CS) but missing brassinolide (BL). Catalyzes the C6-oxidation step in brassinosteroids biosynthesis; the conversion of 6-deoxoteasterone (6-deoxoTE) to teasterone (TE), 3-dehydro-6-deoxoteasterone (6-deoxo3DT, 6-deoxo-3-DHT) to 3-dehydroteasterone (3DT, 3-DHT), 6-deoxotyphasterol (6-deoxoTY) to typhasterol (TY) and of 6-deoxocastasterone (6-deoxoCS) to castasterone (CS). This Brachypodium distachyon (Purple false brome) protein is Cytochrome P450 85A1.